A 136-amino-acid chain; its full sequence is Holo-[acyl-carrier-protein] synthase (136 aa).

Mg(2+) contacts are provided by Asp-8 and Glu-62.

The protein belongs to the P-Pant transferase superfamily. AcpS family. Mg(2+) is required as a cofactor.

It is found in the cytoplasm. The enzyme catalyses apo-[ACP] + CoA = holo-[ACP] + adenosine 3',5'-bisphosphate + H(+). Its function is as follows. Transfers the 4'-phosphopantetheine moiety from coenzyme A to a Ser of acyl-carrier-protein. This is Holo-[acyl-carrier-protein] synthase from Polynucleobacter necessarius subsp. necessarius (strain STIR1).